The sequence spans 63 residues: MARITVQDAVEKVGNIFDLILVAARRARQMQIGGKETLITKNNNDKYTVLALREIEEDLITKK.

Belongs to the RNA polymerase subunit omega family. The RNAP catalytic core consists of 2 alpha, 1 beta, 1 beta' and 1 omega subunit. When a sigma factor is associated with the core the holoenzyme is formed, which can initiate transcription.

The catalysed reaction is RNA(n) + a ribonucleoside 5'-triphosphate = RNA(n+1) + diphosphate. Its function is as follows. Promotes RNA polymerase assembly. Latches the N- and C-terminal regions of the beta' subunit thereby facilitating its interaction with the beta and alpha subunits. The polypeptide is DNA-directed RNA polymerase subunit omega (Blochmanniella pennsylvanica (strain BPEN)).